The sequence spans 87 residues: NAD(P)H-quinone oxidoreductase subunit O (87 aa).

Residues 1–10 show a composition bias toward basic and acidic residues; it reads MSEQTGKVDD. The disordered stretch occupies residues 1–23; sequence MSEQTGKVDDSQSPPKVQKKLRK.

The protein belongs to the complex I NdhO subunit family. As to quaternary structure, NDH-1 can be composed of about 15 different subunits; different subcomplexes with different compositions have been identified which probably have different functions.

It is found in the cellular thylakoid membrane. It carries out the reaction a plastoquinone + NADH + (n+1) H(+)(in) = a plastoquinol + NAD(+) + n H(+)(out). The enzyme catalyses a plastoquinone + NADPH + (n+1) H(+)(in) = a plastoquinol + NADP(+) + n H(+)(out). In terms of biological role, NDH-1 shuttles electrons from an unknown electron donor, via FMN and iron-sulfur (Fe-S) centers, to quinones in the respiratory and/or the photosynthetic chain. The immediate electron acceptor for the enzyme in this species is believed to be plastoquinone. Couples the redox reaction to proton translocation, and thus conserves the redox energy in a proton gradient. Cyanobacterial NDH-1 also plays a role in inorganic carbon-concentration. In Prochlorococcus marinus (strain NATL2A), this protein is NAD(P)H-quinone oxidoreductase subunit O.